The following is a 424-amino-acid chain: Serine hydroxymethyltransferase (424 aa).

Residues Leu-118 and 122 to 124 (GHL) contribute to the (6S)-5,6,7,8-tetrahydrofolate site. Lys-227 carries the post-translational modification N6-(pyridoxal phosphate)lysine. (6S)-5,6,7,8-tetrahydrofolate is bound at residue 351–353 (SPF).

It belongs to the SHMT family. As to quaternary structure, homodimer. It depends on pyridoxal 5'-phosphate as a cofactor.

It is found in the cytoplasm. The catalysed reaction is (6R)-5,10-methylene-5,6,7,8-tetrahydrofolate + glycine + H2O = (6S)-5,6,7,8-tetrahydrofolate + L-serine. It functions in the pathway one-carbon metabolism; tetrahydrofolate interconversion. It participates in amino-acid biosynthesis; glycine biosynthesis; glycine from L-serine: step 1/1. Catalyzes the reversible interconversion of serine and glycine with tetrahydrofolate (THF) serving as the one-carbon carrier. This reaction serves as the major source of one-carbon groups required for the biosynthesis of purines, thymidylate, methionine, and other important biomolecules. Also exhibits THF-independent aldolase activity toward beta-hydroxyamino acids, producing glycine and aldehydes, via a retro-aldol mechanism. The sequence is that of Serine hydroxymethyltransferase from Pseudothermotoga lettingae (strain ATCC BAA-301 / DSM 14385 / NBRC 107922 / TMO) (Thermotoga lettingae).